Here is a 182-residue protein sequence, read N- to C-terminus: Early upstream open reading frame (182 aa).

It belongs to the EUO family.

The sequence is that of Early upstream open reading frame from Chlamydophila psittaci (strain ATCC VR-125 / 6BC) (Chlamydia psittaci).